Consider the following 571-residue polypeptide: Glutamine--tRNA ligase (571 aa).

A 'HIGH' region motif is present at residues 35 to 45 (PEPNGYLHIGH). Residues 36–38 (EPN) and 42–48 (HIGHAKS) each bind ATP. L-glutamine is bound by residues aspartate 68 and tyrosine 213. ATP-binding positions include threonine 232, 262-263 (RL), and 270-272 (LSK). The 'KMSKS' region signature appears at 269-273 (ILSKR).

This sequence belongs to the class-I aminoacyl-tRNA synthetase family. In terms of assembly, monomer.

It is found in the cytoplasm. It carries out the reaction tRNA(Gln) + L-glutamine + ATP = L-glutaminyl-tRNA(Gln) + AMP + diphosphate. The polypeptide is Glutamine--tRNA ligase (Buchnera aphidicola subsp. Acyrthosiphon pisum (strain 5A)).